The chain runs to 294 residues: ATP synthase gamma chain (294 aa).

The protein belongs to the ATPase gamma chain family. F-type ATPases have 2 components, CF(1) - the catalytic core - and CF(0) - the membrane proton channel. CF(1) has five subunits: alpha(3), beta(3), gamma(1), delta(1), epsilon(1). CF(0) has three main subunits: a, b and c.

The protein resides in the cell inner membrane. Its function is as follows. Produces ATP from ADP in the presence of a proton gradient across the membrane. The gamma chain is believed to be important in regulating ATPase activity and the flow of protons through the CF(0) complex. In Rhizobium etli (strain CIAT 652), this protein is ATP synthase gamma chain.